The sequence spans 421 residues: Enolase (421 aa).

The active-site Proton donor is Glu-207. Asp-244, Glu-285, and Asp-312 together coordinate Mg(2+). Lys-337 acts as the Proton acceptor in catalysis. (2R)-2-phosphoglycerate contacts are provided by Lys-337, Arg-366, Ser-367, and Lys-388.

It belongs to the enolase family. Mg(2+) is required as a cofactor.

It is found in the cytoplasm. It localises to the secreted. The protein localises to the cell surface. It catalyses the reaction (2R)-2-phosphoglycerate = phosphoenolpyruvate + H2O. It participates in carbohydrate degradation; glycolysis; pyruvate from D-glyceraldehyde 3-phosphate: step 4/5. Functionally, catalyzes the reversible conversion of 2-phosphoglycerate (2-PG) into phosphoenolpyruvate (PEP). It is essential for the degradation of carbohydrates via glycolysis. In Ehrlichia ruminantium (strain Gardel), this protein is Enolase.